A 748-amino-acid chain; its full sequence is Polyribonucleotide nucleotidyltransferase (748 aa).

Mg(2+)-binding residues include D487 and D493. Positions 554-613 (PSTTTIKIDKDKIRDIIGPGGKVIKEICETSGAKIDISDDGTVSVYASDRDKLKVALDKI) constitute a KH domain. In terms of domain architecture, S1 motif spans 623 to 691 (GEIFNGTVVK…NKGKAKLTIK (69 aa)). The tract at residues 691 to 748 (KNADKDKSSNNTKPKTNVNNTKDNSEPEQRRDSSKKRAWNEDNNAETAEVITERKYFN) is disordered. Residues 699–712 (SNNTKPKTNVNNTK) are compositionally biased toward low complexity. The segment covering 713-722 (DNSEPEQRRD) has biased composition (basic and acidic residues).

The protein belongs to the polyribonucleotide nucleotidyltransferase family. The cofactor is Mg(2+).

It localises to the cytoplasm. It carries out the reaction RNA(n+1) + phosphate = RNA(n) + a ribonucleoside 5'-diphosphate. Its function is as follows. Involved in mRNA degradation. Catalyzes the phosphorolysis of single-stranded polyribonucleotides processively in the 3'- to 5'-direction. The sequence is that of Polyribonucleotide nucleotidyltransferase from Rickettsia africae (strain ESF-5).